The primary structure comprises 502 residues: D-alanine--D-alanyl carrier protein ligase (502 aa).

ATP is bound at residue 150–151; sequence TS. Asp-195 contacts D-alanine. ATP is bound at residue 290-295; that stretch reads NTYGPT. Position 299 (Val-299) interacts with D-alanine. Residues Asp-381 and Lys-490 each coordinate ATP. Residue Lys-490 coordinates D-alanine.

It belongs to the ATP-dependent AMP-binding enzyme family. DltA subfamily.

The protein localises to the cytoplasm. The enzyme catalyses holo-[D-alanyl-carrier protein] + D-alanine + ATP = D-alanyl-[D-alanyl-carrier protein] + AMP + diphosphate. Its pathway is cell wall biogenesis; lipoteichoic acid biosynthesis. Catalyzes the first step in the D-alanylation of lipoteichoic acid (LTA), the activation of D-alanine and its transfer onto the D-alanyl carrier protein (Dcp) DltC. In an ATP-dependent two-step reaction, forms a high energy D-alanyl-AMP intermediate, followed by transfer of the D-alanyl residue as a thiol ester to the phosphopantheinyl prosthetic group of the Dcp. D-alanylation of LTA plays an important role in modulating the properties of the cell wall in Gram-positive bacteria, influencing the net charge of the cell wall. This is D-alanine--D-alanyl carrier protein ligase from Bacillus licheniformis (strain ATCC 14580 / DSM 13 / JCM 2505 / CCUG 7422 / NBRC 12200 / NCIMB 9375 / NCTC 10341 / NRRL NRS-1264 / Gibson 46).